The primary structure comprises 131 residues: Type 3 secretion system pilotin (131 aa).

The signal sequence occupies residues 1 to 15 (MSRIIALIISFLLVG). The N-palmitoyl cysteine moiety is linked to residue Cys16. Cys16 is lipidated: S-diacylglycerol cysteine.

This sequence belongs to the ExsB/YscW family. Interacts with YscC/SctC.

The protein resides in the cell outer membrane. Its function is as follows. Involved in the synthesis of the type III secretion system (T3SS), also called injectisome, which is used to inject bacterial effector proteins into eukaryotic host cells. Pilot protein that is required for the proper localization of the secretin YscC/SctC in the outer membrane. Also required for efficient oligomerization of YscC/SctC and stabilization of the oligomers. This Yersinia enterocolitica protein is Type 3 secretion system pilotin.